The primary structure comprises 318 residues: ATP-dependent (S)-NAD(P)H-hydrate dehydratase (318 aa).

The 311-residue stretch at A3 to L313 folds into the YjeF C-terminal domain. (6S)-NADPHX-binding positions include G119 and N172 to R178. Residues K210–D214 and T229–G238 each bind ATP. Residue D239 participates in (6S)-NADPHX binding.

Belongs to the NnrD/CARKD family. Mg(2+) serves as cofactor.

It is found in the cytoplasm. The enzyme catalyses (6S)-NADHX + ATP = ADP + phosphate + NADH + H(+). It carries out the reaction (6S)-NADPHX + ATP = ADP + phosphate + NADPH + H(+). Its function is as follows. Catalyzes the dehydration of the S-form of NAD(P)HX at the expense of ATP, which is converted to ADP. Together with NAD(P)HX epimerase, which catalyzes the epimerization of the S- and R-forms, the enzyme allows the repair of both epimers of NAD(P)HX, a damaged form of NAD(P)H that is a result of enzymatic or heat-dependent hydration. The sequence is that of ATP-dependent (S)-NAD(P)H-hydrate dehydratase from Batrachochytrium dendrobatidis (strain JAM81 / FGSC 10211) (Frog chytrid fungus).